A 31-amino-acid polypeptide reads, in one-letter code: MLTIISYFGLLLATLTFTIVLFVGLSKIQLI.

A helical transmembrane segment spans residues 4–24 (IISYFGLLLATLTFTIVLFVG).

It belongs to the PetL family. The 4 large subunits of the cytochrome b6-f complex are cytochrome b6, subunit IV (17 kDa polypeptide, PetD), cytochrome f and the Rieske protein, while the 4 small subunits are PetG, PetL, PetM and PetN. The complex functions as a dimer.

Its subcellular location is the plastid. The protein localises to the chloroplast thylakoid membrane. Component of the cytochrome b6-f complex, which mediates electron transfer between photosystem II (PSII) and photosystem I (PSI), cyclic electron flow around PSI, and state transitions. PetL is important for photoautotrophic growth as well as for electron transfer efficiency and stability of the cytochrome b6-f complex. The protein is Cytochrome b6-f complex subunit 6 of Staurastrum punctulatum (Green alga).